The primary structure comprises 643 residues: Melanoma-associated antigen C3 (643 aa).

2 MAGE domains span residues leucine 184 to methionine 384 and leucine 456 to glutamate 643. The disordered stretch occupies residues asparagine 347 to serine 421. Positions histidine 354–leucine 363 are enriched in basic and acidic residues. Pro residues predominate over residues glycine 383–serine 414. Phosphothreonine occurs at positions 478, 484, and 485.

In terms of tissue distribution, expressed in testis. Not expressed in other normal tissues, but is expressed in tumors of different histological origins.

The polypeptide is Melanoma-associated antigen C3 (MAGEC3) (Homo sapiens (Human)).